A 379-amino-acid chain; its full sequence is UDP-N-acetylglucosamine--N-acetylmuramyl-(pentapeptide) pyrophosphoryl-undecaprenol N-acetylglucosamine transferase (379 aa).

Residues 17-19 (TGG), asparagine 128, arginine 169, serine 197, and glutamine 298 each bind UDP-N-acetyl-alpha-D-glucosamine.

The protein belongs to the glycosyltransferase 28 family. MurG subfamily.

It localises to the cell inner membrane. It carries out the reaction di-trans,octa-cis-undecaprenyl diphospho-N-acetyl-alpha-D-muramoyl-L-alanyl-D-glutamyl-meso-2,6-diaminopimeloyl-D-alanyl-D-alanine + UDP-N-acetyl-alpha-D-glucosamine = di-trans,octa-cis-undecaprenyl diphospho-[N-acetyl-alpha-D-glucosaminyl-(1-&gt;4)]-N-acetyl-alpha-D-muramoyl-L-alanyl-D-glutamyl-meso-2,6-diaminopimeloyl-D-alanyl-D-alanine + UDP + H(+). The protein operates within cell wall biogenesis; peptidoglycan biosynthesis. In terms of biological role, cell wall formation. Catalyzes the transfer of a GlcNAc subunit on undecaprenyl-pyrophosphoryl-MurNAc-pentapeptide (lipid intermediate I) to form undecaprenyl-pyrophosphoryl-MurNAc-(pentapeptide)GlcNAc (lipid intermediate II). The protein is UDP-N-acetylglucosamine--N-acetylmuramyl-(pentapeptide) pyrophosphoryl-undecaprenol N-acetylglucosamine transferase of Brucella melitensis biotype 2 (strain ATCC 23457).